We begin with the raw amino-acid sequence, 363 residues long: Endopolygalacturonase 1 (363 aa).

The N-terminal stretch at 1–17 (MVSYLFVLGALASVAIA) is a signal peptide. A propeptide spanning residues 18-26 (SPVPELKAR) is cleaved from the precursor. A disulfide bridge connects residues C29 and C44. 4 PbH1 repeats span residues 188–209 (STGV…AVNS), 210–230 (GTNI…SIGS), 239–260 (VKSV…RIKT), and 268–290 (VSDI…VIEQ). Residue D202 is the Proton donor of the active site. C204 and C220 are oxidised to a cystine. Residue N212 is glycosylated (N-linked (GlcNAc...) asparagine). Residue H224 is part of the active site. 2 disulfide bridges follow: C330–C333 and C352–C363.

The protein belongs to the glycosyl hydrolase 28 family.

The protein localises to the secreted. It catalyses the reaction (1,4-alpha-D-galacturonosyl)n+m + H2O = (1,4-alpha-D-galacturonosyl)n + (1,4-alpha-D-galacturonosyl)m.. Involved in maceration and soft-rotting of plant tissue. Hydrolyzes the 1,4-alpha glycosidic bonds of de-esterified pectate in the smooth region of the plant cell wall. This is Endopolygalacturonase 1 (PG1) from Colletotrichum lindemuthianum (Bean anthracnose fungus).